Here is a 568-residue protein sequence, read N- to C-terminus: Type 3 secretion system secretin (568 aa).

Positions 1–15 (MAAALLLWTAGTVCA) are cleaved as a signal peptide. The tract at residues 203 to 292 (YGGDGPSDSG…RGSTPIIRAD (90 aa)) is disordered. Residues 243-257 (LGGGKSPLPPGGTGQ) show a composition bias toward gly residues. The span at 273 to 284 (NRLRSDELDDRG) shows a compositional bias: basic and acidic residues.

This sequence belongs to the bacterial secretin family. T3SS SctC subfamily. The core secretion machinery of the T3SS is composed of approximately 20 different proteins, including cytoplasmic components, a base, an export apparatus and a needle. This subunit is part of the base, which anchors the injectisome in the bacterial cell envelope. Forms a stable homooligomeric complex.

It localises to the cell outer membrane. Component of the type III secretion system (T3SS), also called injectisome, which is used to inject bacterial effector proteins into eukaryotic host cells. Forms a ring-shaped multimeric structure with an apparent central pore in the outer membrane. This is Type 3 secretion system secretin from Ralstonia nicotianae (strain ATCC BAA-1114 / GMI1000) (Ralstonia solanacearum).